Here is a 475-residue protein sequence, read N- to C-terminus: Tubulin gamma-1 chain (475 aa).

Residue 142 to 148 (AGGTGSG) participates in GTP binding. The disordered stretch occupies residues 453 to 475 (VKRGNGPVDSKSEDSRSVTSAGS).

It belongs to the tubulin family. As to quaternary structure, interacts with Ote.

The protein resides in the cytoplasm. It is found in the cytoskeleton. Its subcellular location is the microtubule organizing center. The protein localises to the centrosome. It localises to the perinuclear region. Functionally, tubulin is the major constituent of microtubules. The gamma chain is found at microtubule organizing centers (MTOC) such as the spindle poles or the centrosome, suggesting that it is involved in the minus-end nucleation of microtubule assembly. The sequence is that of Tubulin gamma-1 chain (gammaTub23C) from Drosophila melanogaster (Fruit fly).